Consider the following 614-residue polypeptide: Threonine--tRNA ligase (614 aa).

The segment at 1–138 (MRILTIHARK…PLSELSKTIR (138 aa)) is editing domain. 2 catalytic regions span residues 195-492 (NRVN…PYIP) and 196-492 (RVND…PYIP). Zn(2+) is bound by residues Cys289, His340, and His461.

This sequence belongs to the class-II aminoacyl-tRNA synthetase family. Homodimer. Zn(2+) is required as a cofactor.

It is found in the cytoplasm. It carries out the reaction tRNA(Thr) + L-threonine + ATP = L-threonyl-tRNA(Thr) + AMP + diphosphate + H(+). In terms of biological role, catalyzes the attachment of threonine to tRNA(Thr) in a two-step reaction: L-threonine is first activated by ATP to form Thr-AMP and then transferred to the acceptor end of tRNA(Thr). Also edits incorrectly charged L-seryl-tRNA(Thr). This is Threonine--tRNA ligase from Staphylothermus marinus (strain ATCC 43588 / DSM 3639 / JCM 9404 / F1).